The chain runs to 566 residues: MKISRHAYADTYGPTTGDRVRLADTDLWIKVERDLTTYGDEVKFGGGKVIRDGMGQSQLSRDQVMDLVITNALIVDHWGIIKADVGIKDGRIAAIGKAGNPDTQPNVDINIGAATEVIAGEGKILTAGGIDSHVHFICPQLVEEALTSGVTTLIGGGTGPATGTNATTCTPGSWNIGRMLQAADAFPINMGFLGKGNASLPQSLEEQVRAGVLGLKLHEDWGTTPAAIDNCLSVAERFDVQVTIHTDTLNESGFVEDTIAAFKDRTIHTYHTEGAGGGHAPDIIKACGEANVLPSSTNPTTPFTANTIDEHLDMLMVCHHLDPSIPEDVAFAESRIRRETISAEDALHDMGALSMHGSDSQAMGRVGEVILRTWQSASVMKRDRGTLPEDKGDHDNFRIKRYIAKYTINPAITHGIAHEIGSIEVGKLADLVLWKPAFFGVKPSLVLKGGVIVTAPMGDPNASIPTPQPVHYRPMFGSFGGSRTASCVSFVSQAGLDEGIGEKLGLQKRLVAVKNIRGLRKSDLIHNNALPRIEVDPQNYQVRADGQLLWFEPSKVLPMAQRYFLF.

Residues 128–566 (GGIDSHVHFI…LPMAQRYFLF (439 aa)) form the Urease domain. Residues His133, His135, and Lys216 each contribute to the Ni(2+) site. Lys216 carries the N6-carboxylysine modification. Position 218 (His218) interacts with substrate. Residues His245 and His271 each contribute to the Ni(2+) site. Residue His319 is the Proton donor of the active site. A Ni(2+)-binding site is contributed by Asp359.

It belongs to the metallo-dependent hydrolases superfamily. Urease alpha subunit family. As to quaternary structure, heterotrimer of UreA (gamma), UreB (beta) and UreC (alpha) subunits. Three heterotrimers associate to form the active enzyme. Ni cation is required as a cofactor. In terms of processing, carboxylation allows a single lysine to coordinate two nickel ions.

Its subcellular location is the cytoplasm. It catalyses the reaction urea + 2 H2O + H(+) = hydrogencarbonate + 2 NH4(+). The protein operates within nitrogen metabolism; urea degradation; CO(2) and NH(3) from urea (urease route): step 1/1. This Nitrosococcus oceani (strain ATCC 19707 / BCRC 17464 / JCM 30415 / NCIMB 11848 / C-107) protein is Urease subunit alpha.